The chain runs to 572 residues: Glutathione hydrolase 1 (572 aa).

The N-terminal stretch at 1 to 22 is a signal peptide; it reads MSLVRTVTIVLFIIAFLQNAAA. An L-glutamate-binding site is contributed by arginine 99. Residues asparagine 171 and asparagine 222 are each glycosylated (N-linked (GlcNAc...) asparagine). Threonine 368 serves as the catalytic Nucleophile. L-glutamate-binding positions include threonine 386, asparagine 388, glutamate 407, aspartate 410, 440–441, and 461–462; these read SS and GG. N-linked (GlcNAc...) asparagine glycosylation occurs at asparagine 505. A disordered region spans residues 552-572; sequence GGRSELVAVSDPRKGGFPSGY.

This sequence belongs to the gamma-glutamyltransferase family. Expressed in embryo, roots and leaves. In mature plants, expression is restricted to vascular tissues of roots, leaves, flowers and siliques.

The protein localises to the secreted. Its subcellular location is the extracellular space. It localises to the apoplast. It catalyses the reaction an N-terminal (5-L-glutamyl)-[peptide] + an alpha-amino acid = 5-L-glutamyl amino acid + an N-terminal L-alpha-aminoacyl-[peptide]. The enzyme catalyses glutathione + H2O = L-cysteinylglycine + L-glutamate. It carries out the reaction an S-substituted glutathione + H2O = an S-substituted L-cysteinylglycine + L-glutamate. The protein operates within sulfur metabolism; glutathione metabolism. May play a role in preventing oxidative stress by metabolizing extracellular oxidized glutathione (GSSG). The sequence is that of Glutathione hydrolase 1 (GGT1) from Arabidopsis thaliana (Mouse-ear cress).